Reading from the N-terminus, the 227-residue chain is 2-C-methyl-D-erythritol 4-phosphate cytidylyltransferase (227 aa).

Belongs to the IspD/TarI cytidylyltransferase family. IspD subfamily.

The catalysed reaction is 2-C-methyl-D-erythritol 4-phosphate + CTP + H(+) = 4-CDP-2-C-methyl-D-erythritol + diphosphate. It functions in the pathway isoprenoid biosynthesis; isopentenyl diphosphate biosynthesis via DXP pathway; isopentenyl diphosphate from 1-deoxy-D-xylulose 5-phosphate: step 2/6. In terms of biological role, catalyzes the formation of 4-diphosphocytidyl-2-C-methyl-D-erythritol from CTP and 2-C-methyl-D-erythritol 4-phosphate (MEP). In Deinococcus geothermalis (strain DSM 11300 / CIP 105573 / AG-3a), this protein is 2-C-methyl-D-erythritol 4-phosphate cytidylyltransferase.